The following is a 146-amino-acid chain: ATP synthase epsilon chain 2 (146 aa).

It belongs to the ATPase epsilon chain family. In terms of assembly, F-type ATPases have 2 components, CF(1) - the catalytic core - and CF(0) - the membrane proton channel. CF(1) has five subunits: alpha(3), beta(3), gamma(1), delta(1), epsilon(1). CF(0) has three main subunits: a, b and c.

The protein localises to the cell inner membrane. Functionally, produces ATP from ADP in the presence of a proton gradient across the membrane. This chain is ATP synthase epsilon chain 2, found in Cereibacter sphaeroides (strain ATCC 17023 / DSM 158 / JCM 6121 / CCUG 31486 / LMG 2827 / NBRC 12203 / NCIMB 8253 / ATH 2.4.1.) (Rhodobacter sphaeroides).